The primary structure comprises 362 residues: 3-ketodihydrosphingosine reductase gsl-3 (362 aa).

Position 55 (Leu-55) interacts with NADP(+). NADPH contacts are provided by Gly-58, Ser-60, Gly-62, and Arg-83. The short motif at 58-62 (GASEG) is the GXSXG element. Position 84 (Asn-84) interacts with NADP(+). NADPH is bound by residues Arg-87 and Asp-113. NADP(+) contacts are provided by Asp-113, Arg-176, Tyr-216, Lys-220, Ile-252, and Ser-254. Residue Tyr-216 is the Proton acceptor of the active site. The active-site Lowers pKa of active site Tyr is the Lys-220. A helical transmembrane segment spans residues 318–338 (NNWVLDTLMGWLIPIIYFFVL).

It belongs to the short-chain dehydrogenases/reductases (SDR) family.

It is found in the endoplasmic reticulum membrane. It carries out the reaction sphinganine + NADP(+) = 3-oxosphinganine + NADPH + H(+). The protein operates within lipid metabolism; sphingolipid metabolism. Functionally, catalyzes the reduction of 3'-oxosphinganine (3-ketodihydrosphingosine/KDS) to sphinganine (dihydrosphingosine/DHS), the second step of de novo sphingolipid biosynthesis. This chain is 3-ketodihydrosphingosine reductase gsl-3 (gsl-3), found in Neurospora crassa (strain ATCC 24698 / 74-OR23-1A / CBS 708.71 / DSM 1257 / FGSC 987).